Consider the following 515-residue polypeptide: Glucose-6-phosphate 1-dehydrogenase (515 aa).

Ala2 is subject to N-acetylalanine. Ser8 bears the Phosphoserine mark. Thr10 carries the phosphothreonine modification. NADP(+) contacts are provided by residues 38–45 and Arg72; that span reads GASGDLAK. The residue at position 89 (Lys89) is an N6-acetyllysine. NADP(+) is bound by residues Tyr147 and Lys171. D-glucose 6-phosphate-binding positions include Lys171, 201–205, Glu239, and Asp258; that span reads HYLGK. N6-(2-hydroxyisobutyryl)lysine; alternate is present on Lys171. At Lys171 the chain carries N6-acetyllysine; alternate. Catalysis depends on His263, which acts as the Proton acceptor. Arg357 is a binding site for NADP(+). 2 residues coordinate D-glucose 6-phosphate: Lys360 and Arg365. NADP(+) is bound by residues Lys366, Arg370, and Arg393. Gln395 is a binding site for D-glucose 6-phosphate. Residues 401–403 and 421–423 contribute to the NADP(+) site; these read YTK and DLT. An N6-acetyllysine modification is found at Lys403. At Lys432 the chain carries N6-acetyllysine. Arg487 contacts NADP(+). The residue at position 497 (Lys497) is an N6-acetyllysine. Residues Tyr503 and Trp509 each coordinate NADP(+). Tyr503 carries the phosphotyrosine modification.

The protein belongs to the glucose-6-phosphate dehydrogenase family. In terms of assembly, homotetramer; dimer of dimers. Interacts with SIRT2; the interaction is enhanced by H(2)O(2) treatment. Forms a ternary complex with ALDOB and TP53; this interaction is direct. ALDOB stabilizes the complex inhibiting G6PD activity and keeping oxidative pentose phosphate metabolism in check. Post-translationally, acetylated by ELP3 at Lys-403; acetylation inhibits its homodimerization and enzyme activity. Deacetylated by SIRT2 at Lys-403; deacetylation stimulates its enzyme activity.

It is found in the cytoplasm. The protein localises to the cytosol. Its subcellular location is the membrane. It carries out the reaction D-glucose 6-phosphate + NADP(+) = 6-phospho-D-glucono-1,5-lactone + NADPH + H(+). It participates in carbohydrate degradation; pentose phosphate pathway; D-ribulose 5-phosphate from D-glucose 6-phosphate (oxidative stage): step 1/3. In terms of biological role, cytosolic glucose-6-phosphate dehydrogenase that catalyzes the first and rate-limiting step of the oxidative branch within the pentose phosphate pathway/shunt, an alternative route to glycolysis for the dissimilation of carbohydrates and a major source of reducing power and metabolic intermediates for fatty acid and nucleic acid biosynthetic processes. The polypeptide is Glucose-6-phosphate 1-dehydrogenase (G6PD) (Osphranter robustus (Wallaroo)).